Here is a 349-residue protein sequence, read N- to C-terminus: Methylthioribose-1-phosphate isomerase (349 aa).

Substrate is bound by residues 51-53 (RGA), Arg94, and Gln199. The Proton donor role is filled by Asp240. 250–251 (NK) contacts substrate.

The protein belongs to the eIF-2B alpha/beta/delta subunits family. MtnA subfamily. As to quaternary structure, homodimer.

The catalysed reaction is 5-(methylsulfanyl)-alpha-D-ribose 1-phosphate = 5-(methylsulfanyl)-D-ribulose 1-phosphate. The protein operates within amino-acid biosynthesis; L-methionine biosynthesis via salvage pathway; L-methionine from S-methyl-5-thio-alpha-D-ribose 1-phosphate: step 1/6. Its function is as follows. Catalyzes the interconversion of methylthioribose-1-phosphate (MTR-1-P) into methylthioribulose-1-phosphate (MTRu-1-P). The sequence is that of Methylthioribose-1-phosphate isomerase from Bacillus cytotoxicus (strain DSM 22905 / CIP 110041 / 391-98 / NVH 391-98).